The primary structure comprises 91 residues: CRISPR-associated endoribonuclease Cas2 2 (91 aa).

Asp-8 is a Mg(2+) binding site.

Belongs to the CRISPR-associated endoribonuclease Cas2 protein family. Homodimer, forms a heterotetramer with a Cas1 homodimer. It depends on Mg(2+) as a cofactor.

CRISPR (clustered regularly interspaced short palindromic repeat), is an adaptive immune system that provides protection against mobile genetic elements (viruses, transposable elements and conjugative plasmids). CRISPR clusters contain sequences complementary to antecedent mobile elements and target invading nucleic acids. CRISPR clusters are transcribed and processed into CRISPR RNA (crRNA). Functions as a ssRNA-specific endoribonuclease. Involved in the integration of spacer DNA into the CRISPR cassette. This is CRISPR-associated endoribonuclease Cas2 2 from Pyrobaculum aerophilum (strain ATCC 51768 / DSM 7523 / JCM 9630 / CIP 104966 / NBRC 100827 / IM2).